Reading from the N-terminus, the 375-residue chain is Nucleosome assembly protein 1-like 4 (375 aa).

The interval 1-28 is disordered; that stretch reads MAENSLSDGGPADSVEAAKNASNTEKLT. N-acetylalanine is present on A2. A phosphoserine mark is found at S5, S7, and S49. T51 is subject to Phosphothreonine. 2 positions are modified to phosphoserine: S53 and S54. T58 carries the post-translational modification Phosphothreonine. K105 carries the N6-acetyllysine modification. S125 is subject to Phosphoserine. The residue at position 146 (K146) is an N6-acetyllysine. The Nuclear localization signal motif lies at 265–271; the sequence is IKKKQKH. S304 is modified (phosphoserine). The tract at residues 339–375 is disordered; sequence AIEDDDNFEEGEEGEEEELEGDEEGEDEDDADVNPKV.

It belongs to the nucleosome assembly protein (NAP) family. Interacts with core (H2A, H2B, H3, H4) and linker (H1) histones. Post-translationally, polyglutamylated and polyglycylated. These 2 modifications occur exclusively on glutamate residues and result in either polyglutamate or polyglycine chains on the gamma-carboxyl group. Both modifications can coexist on the same protein on adjacent residues, and lowering polyglycylation levels increases polyglutamylation, and reciprocally. Polyglutamylated by TTLL4. Phosphorylated at the G0/G1 boundary but it is not phosphorylated in S-phase. Phosphorylated protein remains in the cytoplasm in a complex with histones during the G0/G1 transition, whereas dephosphorylation triggers its transport into the nucleus at the G1/S-boundary.

It localises to the nucleus. The protein localises to the cytoplasm. Acts as a histone chaperone in nucleosome assembly. In condensing spermatids, mediates the loading of the heterodimer composed of histones H2AB1 and H2BC1/TH2B onto the nucleosomes, thereby promoting the replacement of histones to protamine in male germ cells. The chain is Nucleosome assembly protein 1-like 4 (Nap1l4) from Mus musculus (Mouse).